The following is a 142-amino-acid chain: 3-hydroxyacyl-[acyl-carrier-protein] dehydratase FabZ (142 aa).

Histidine 50 is a catalytic residue.

This sequence belongs to the thioester dehydratase family. FabZ subfamily.

It localises to the cytoplasm. The enzyme catalyses a (3R)-hydroxyacyl-[ACP] = a (2E)-enoyl-[ACP] + H2O. Its function is as follows. Involved in unsaturated fatty acids biosynthesis. Catalyzes the dehydration of short chain beta-hydroxyacyl-ACPs and long chain saturated and unsaturated beta-hydroxyacyl-ACPs. This Clostridium tetani (strain Massachusetts / E88) protein is 3-hydroxyacyl-[acyl-carrier-protein] dehydratase FabZ.